A 342-amino-acid chain; its full sequence is Probable dual-specificity RNA methyltransferase RlmN (342 aa).

Glutamate 91 functions as the Proton acceptor in the catalytic mechanism. The 231-residue stretch at 97 to 327 folds into the Radical SAM core domain; sequence YRYGNTVCLS…VTVRRELGDE (231 aa). The cysteines at positions 104 and 332 are disulfide-linked. [4Fe-4S] cluster-binding residues include cysteine 111, cysteine 115, and cysteine 118. S-adenosyl-L-methionine-binding positions include 158–159, serine 190, 213–215, and asparagine 289; these read GE and SLH. Cysteine 332 functions as the S-methylcysteine intermediate in the catalytic mechanism.

The protein belongs to the radical SAM superfamily. RlmN family. [4Fe-4S] cluster serves as cofactor.

The protein localises to the cytoplasm. The enzyme catalyses adenosine(2503) in 23S rRNA + 2 reduced [2Fe-2S]-[ferredoxin] + 2 S-adenosyl-L-methionine = 2-methyladenosine(2503) in 23S rRNA + 5'-deoxyadenosine + L-methionine + 2 oxidized [2Fe-2S]-[ferredoxin] + S-adenosyl-L-homocysteine. It carries out the reaction adenosine(37) in tRNA + 2 reduced [2Fe-2S]-[ferredoxin] + 2 S-adenosyl-L-methionine = 2-methyladenosine(37) in tRNA + 5'-deoxyadenosine + L-methionine + 2 oxidized [2Fe-2S]-[ferredoxin] + S-adenosyl-L-homocysteine. Its function is as follows. Specifically methylates position 2 of adenine 2503 in 23S rRNA and position 2 of adenine 37 in tRNAs. The polypeptide is Probable dual-specificity RNA methyltransferase RlmN (Carboxydothermus hydrogenoformans (strain ATCC BAA-161 / DSM 6008 / Z-2901)).